Consider the following 272-residue polypeptide: Undecaprenyl-diphosphatase (272 aa).

7 helical membrane passes run 2 to 22 (FDII…FLPI), 43 to 63 (FINM…ILLY), 82 to 102 (WQLW…GLPL), 110 to 130 (LHTP…FIIL), 185 to 205 (YVAT…VSIL), 224 to 244 (VLMT…KWLL), and 252 to 272 (FKPF…VMFI).

Belongs to the UppP family.

Its subcellular location is the cell membrane. It catalyses the reaction di-trans,octa-cis-undecaprenyl diphosphate + H2O = di-trans,octa-cis-undecaprenyl phosphate + phosphate + H(+). Its function is as follows. Catalyzes the dephosphorylation of undecaprenyl diphosphate (UPP). Confers resistance to bacitracin. The polypeptide is Undecaprenyl-diphosphatase (Lacticaseibacillus paracasei (strain ATCC 334 / BCRC 17002 / CCUG 31169 / CIP 107868 / KCTC 3260 / NRRL B-441) (Lactobacillus paracasei)).